The sequence spans 516 residues: Thiosulfate sulfurtransferase/rhodanese-like domain-containing protein 2 (516 aa).

Ser-269 carries the phosphoserine modification. The Rhodanese domain occupies 301 to 396; that stretch reads EQSDTILLDC…YLEEFPDGFY (96 aa). Catalysis depends on Cys-355, which acts as the Cysteine persulfide intermediate. Residues 490 to 516 are disordered; the sequence is RELLQHVRQPVSPEPGPDAEEDGPVLV. Residues 506 to 516 show a composition bias toward acidic residues; that stretch reads PDAEEDGPVLV.

This is Thiosulfate sulfurtransferase/rhodanese-like domain-containing protein 2 (TSTD2) from Pongo abelii (Sumatran orangutan).